A 1140-amino-acid chain; its full sequence is Eukaryotic translation initiation factor 3 subunit A (1140 aa).

The region spanning 319-501 (LQRMAAHVLL…NSIYFGTDLT (183 aa)) is the PCI domain. Composition is skewed to basic and acidic residues over residues 588 to 623 (QNNA…EERE) and 829 to 899 (AAEE…RGGD). Disordered stretches follow at residues 588–630 (QNNA…HQNE) and 829–1140 (AAEE…VKRR). Position 908 is a phosphoserine (S908). 4 stretches are compositionally biased toward basic and acidic residues: residues 920–976 (ERND…EPDS), 990–1051 (SRDD…EPQR), 1059–1086 (DAPR…RGDQ), and 1109–1130 (TREE…KAGD).

This sequence belongs to the eIF-3 subunit A family. As to quaternary structure, component of the eukaryotic translation initiation factor 3 (eIF-3) complex. The eIF-3 complex interacts with pix.

It is found in the cytoplasm. Functionally, RNA-binding component of the eukaryotic translation initiation factor 3 (eIF-3) complex, which is involved in protein synthesis of a specialized repertoire of mRNAs and, together with other initiation factors, stimulates binding of mRNA and methionyl-tRNAi to the 40S ribosome. The eIF-3 complex specifically targets and initiates translation of a subset of mRNAs involved in cell proliferation. This is Eukaryotic translation initiation factor 3 subunit A from Drosophila melanogaster (Fruit fly).